The sequence spans 300 residues: Protein orai (300 aa).

At 1-128 (MPRSHDPSRV…SKAQLKASSR (128 aa)) the chain is on the cytoplasmic side. The disordered stretch occupies residues 58–82 (QPPSSGGGSRNVGGGDGAAGNSKNG). Residues 62-75 (SGGGSRNVGGGDGA) show a composition bias toward gly residues. Residues 129–146 (TSALLAGFAMVCLVELQY) form a helical membrane-spanning segment. The Extracellular segment spans residues 147 to 153 (DDSTSKP). Residues 154 to 174 (LLIVLGVVTSLLVSVHLLALM) form a helical membrane-spanning segment. At 175–205 (MSTCILPYMEATGCTQDSPHLKLKFYIDLSW) the chain is on the cytoplasmic side. Residues 206–226 (LFSTCIGLLLFLVEIGVIFYV) form a helical membrane-spanning segment. Topologically, residues 227-237 (KFTAVGYPTAG) are extracellular. The chain crosses the membrane as a helical span at residues 238–258 (YITTAMLIPVGIVFVLFSYLI). The Cytoplasmic portion of the chain corresponds to 259–300 (HKNRVSHSLGRFKDKVDTMKQFLDVEANLQKSTIAPSTIRDI).

The protein belongs to the Orai family.

Its subcellular location is the membrane. Functionally, ca(2+) release-activated Ca(2+)-like (CRAC-like) channel subunit which mediates Ca(2+) influx and increase in Ca(2+)-selective current by synergy with the Ca(2+) sensor, stim-1. Required for Ca(2+) and IP3-dependent contractile activity of sheath cells and the spermatheca. Affects brood size and somatic cell function. The protein is Protein orai (orai-1) of Caenorhabditis briggsae.